The following is a 204-amino-acid chain: Recombination protein RecR (204 aa).

The segment at 61–76 (CACCNTFSETQVCSTC) adopts a C4-type zinc-finger fold. A Toprim domain is found at 84 to 183 (SLLCIVETPA…KVTRIARGIP (100 aa)).

Belongs to the RecR family.

May play a role in DNA repair. It seems to be involved in an RecBC-independent recombinational process of DNA repair. It may act with RecF and RecO. The protein is Recombination protein RecR of Polynucleobacter necessarius subsp. necessarius (strain STIR1).